The following is a 433-amino-acid chain: Pyrimidine-nucleoside phosphorylase (433 aa).

Lysine 81–serine 83 is a binding site for phosphate. The K(+) site is built by glycine 88 and threonine 90. Residues threonine 92, lysine 108 to serine 110, and threonine 120 contribute to the phosphate site. Positions 168 and 187 each coordinate substrate. K(+) contacts are provided by leucine 243, alanine 246, and glutamate 255.

The protein belongs to the thymidine/pyrimidine-nucleoside phosphorylase family. In terms of assembly, homodimer. K(+) is required as a cofactor.

The enzyme catalyses uridine + phosphate = alpha-D-ribose 1-phosphate + uracil. It catalyses the reaction thymidine + phosphate = 2-deoxy-alpha-D-ribose 1-phosphate + thymine. The catalysed reaction is 2'-deoxyuridine + phosphate = 2-deoxy-alpha-D-ribose 1-phosphate + uracil. In terms of biological role, catalyzes phosphorolysis of the pyrimidine nucleosides uridine, thymidine and 2'-deoxyuridine with the formation of the corresponding pyrimidine base and ribose-1-phosphate. The chain is Pyrimidine-nucleoside phosphorylase (pdp) from Staphylococcus aureus (strain Mu50 / ATCC 700699).